The sequence spans 308 residues: Vacuolar lysine transporter YPQ1 (308 aa).

The Vacuolar portion of the chain corresponds to 1-12 (MQLVPLELNRST). Residue N9 is glycosylated (N-linked (GlcNAc...) asparagine). The PQ-loop 1 domain occupies 10–76 (RSTLSGISGS…QHLLSTMIIL (67 aa)). Residues 13-33 (LSGISGSISISCWIIVFVPQI) form a helical membrane-spanning segment. The Cytoplasmic portion of the chain corresponds to 34-44 (YENFYRKSSDG). Residues 45 to 65 (LSLLFVVLWLAGDVFNLMGAV) traverse the membrane as a helical segment. Over 66–68 (MQH) the chain is Vacuolar. A helical membrane pass occupies residues 69–89 (LLSTMIILAAYYTVADIILLG). Over 90–167 (QCLWYDNEEK…EVNSRNLIKD (78 aa)) the chain is Cytoplasmic. Residues 168 to 188 (IFIVSGVVFVGFISWYVTYCV) traverse the membrane as a helical segment. An N-linked (GlcNAc...) asparagine glycan is attached at N189. At 189 to 205 (NYTQPPPVEDPSLPVPE) the chain is on the vacuolar side. Residues 206–226 (LQINWMAQIFGYLSALLYLGS) traverse the membrane as a helical segment. The 64-residue stretch at 211–274 (MAQIFGYLSA…ISLDWKYLIM (64 aa)) folds into the PQ-loop 2 domain. The Cytoplasmic segment spans residues 227–244 (RIPQILLNFKRKSCEGIS). A helical transmembrane segment spans residues 245 to 265 (FLFFLFACLGNTTFIFSVIVI). Residues 266–277 (SLDWKYLIMNAS) lie on the Vacuolar side of the membrane. N275 carries an N-linked (GlcNAc...) asparagine glycan. Residues 278–298 (WLVGSIGTLFMDFVIFSQFFI) form a helical membrane-spanning segment. The Cytoplasmic segment spans residues 299-308 (YKRNKKFILN).

The protein belongs to the laat-1 family.

It is found in the vacuole membrane. Amino acid transporter that moves lysine into the vacuole. May also contribute to low affinity arginine import into the vacuole. Has also been suggested to mediate export of cationic amino acids from the vacuole. May function as an amino acid/proton antiporter. The polypeptide is Vacuolar lysine transporter YPQ1 (YPQ1) (Saccharomyces cerevisiae (strain ATCC 204508 / S288c) (Baker's yeast)).